A 177-amino-acid chain; its full sequence is MSVNMDELKHQVMINQFVLTAGCAADQAKQLLQAAHWQFETALSAFFQETNIPYSHHHHQMMCTPANTPATPPNFPDALTMFSRLKASESFHSGGSGSPMAATATSPPPHFPHAATSSSAASSWPTAASPPGGPQHHQPQPPLWTPTPPSPASDWPPLAPQQATSEPRAHPAMEAER.

The tract at residues 89 to 177 is disordered; it reads ESFHSGGSGS…RAHPAMEAER (89 aa). Residues 112–138 show a composition bias toward low complexity; the sequence is PHAATSSSAASSWPTAASPPGGPQHHQ. The span at 139–151 shows a compositional bias: pro residues; sequence PQPPLWTPTPPSP. Over residues 167 to 177 the composition is skewed to basic and acidic residues; that stretch reads PRAHPAMEAER.

The protein belongs to the UBALD family.

The protein is UBA-like domain-containing protein 1 (UBALD1) of Homo sapiens (Human).